We begin with the raw amino-acid sequence, 224 residues long: Oxalate oxidase GF-3.8 (224 aa).

The first 23 residues, methionine 1–serine 23, serve as a signal peptide directing secretion. A disulfide bridge links cysteine 33 with cysteine 49. The Cupin type-1 domain maps to serine 63 to glutamate 214. 2 N-linked (GlcNAc...) asparagine glycosylation sites follow: asparagine 70 and asparagine 75. Mn(2+)-binding residues include histidine 111, histidine 113, glutamate 118, and histidine 160.

This sequence belongs to the germin family. As to quaternary structure, oligomer (believed to be a pentamer but probably hexamer).

Its subcellular location is the secreted. It is found in the extracellular space. It localises to the apoplast. The protein localises to the cytoplasm. The protein resides in the cell wall. It carries out the reaction oxalate + O2 + 2 H(+) = H2O2 + 2 CO2. Produces developmental and stress-related release of hydrogen peroxide in the apoplast. May play an important role in several aspects of plant growth and defense mechanisms. In Triticum aestivum (Wheat), this protein is Oxalate oxidase GF-3.8.